The primary structure comprises 871 residues: Protein pob1 (871 aa).

An SH3 domain is found at Ala-2–Asp-65. The disordered stretch occupies residues Trp-42–Thr-168. Positions Leu-62 to Phe-80 are enriched in basic and acidic residues. 2 stretches are compositionally biased toward low complexity: residues Thr-88–Ser-100 and Leu-109–Asn-124. Polar residues predominate over residues Ser-131–Thr-168. Residues Ser-224 and Ser-225 each carry the phosphoserine modification. Tyr-229 carries the phosphotyrosine modification. Ser-241 carries the post-translational modification Phosphoserine. The 64-residue stretch at Trp-250–Ser-313 folds into the SAM domain. The segment covering Ile-329–Lys-343 has biased composition (low complexity). Disordered stretches follow at residues Ile-329–Thr-371 and Pro-384–Arg-670. 2 stretches are compositionally biased toward polar residues: residues Pro-384 to Asn-395 and Thr-404 to Leu-451. 3 positions are modified to phosphoserine: Ser-433, Ser-439, and Ser-440. Phosphothreonine is present on Thr-442. Phosphoserine is present on Ser-444. The segment covering Thr-456–Ile-467 has biased composition (low complexity). The span at Gln-492–Val-511 shows a compositional bias: polar residues. Ser-549 is modified (phosphoserine). The span at Ser-549–Ser-560 shows a compositional bias: low complexity. 2 stretches are compositionally biased toward polar residues: residues Asn-561–Pro-574 and Lys-583–Thr-606. In terms of domain architecture, PH spans Thr-698–Val-808.

Its subcellular location is the cytoplasm. The protein localises to the membrane. In terms of biological role, has a role in cell elongation and separation. The chain is Protein pob1 (pob1) from Schizosaccharomyces pombe (strain 972 / ATCC 24843) (Fission yeast).